A 475-amino-acid polypeptide reads, in one-letter code: Ankyrin repeat, SAM and basic leucine zipper domain-containing protein 1 (475 aa).

The disordered stretch occupies residues 1–25 (MAAGALRGLPVAGGGESSESEDDGW). Residues Ser17, Ser18, and Ser20 each carry the phosphoserine modification. ANK repeat units follow at residues 45 to 74 (EKKE…SVDS), 78 to 107 (YGWT…NASF), 110 to 144 (DKQS…DPNV), 148 to 177 (RLMT…EVNT), 181 to 210 (NGYT…NKML), and 214 to 243 (DGKM…PLEG). One can recognise an SAM domain in the interval 272-334 (SYTAFGDLEV…KILAALKELQ (63 aa)).

As to quaternary structure, interacts with DDX4, PIWIL1, RANBP9 and TDRD1.

It localises to the cytoplasm. In terms of biological role, plays a central role during spermatogenesis by repressing transposable elements and preventing their mobilization, which is essential for the germline integrity. Acts via the piRNA metabolic process, which mediates the repression of transposable elements during meiosis by forming complexes composed of piRNAs and Piwi proteins and governs the methylation and subsequent repression of transposons. Its association with pi-bodies suggests a participation in the primary piRNAs metabolic process. Required prior to the pachytene stage to facilitate the production of multiple types of piRNAs, including those associated with repeats involved in the regulation of retrotransposons. May act by mediating protein-protein interactions during germ cell maturation. This is Ankyrin repeat, SAM and basic leucine zipper domain-containing protein 1 (ASZ1) from Pongo abelii (Sumatran orangutan).